A 509-amino-acid polypeptide reads, in one-letter code: Activin receptor type-1 (509 aa).

An N-terminal signal peptide occupies residues 1–20; it reads MVDGVMILPVLIMIALPSPS. Residues 21–123 lie on the Extracellular side of the membrane; that stretch reads MEDEKPKVNP…FPGTQNFHLE (103 aa). N-linked (GlcNAc...) asparagine glycosylation occurs at Asn102. A helical transmembrane segment spans residues 124–146; it reads VGLIILSVVFAVCLLACLLGVAL. Residues 147–509 lie on the Cytoplasmic side of the membrane; the sequence is RKFKRRNQER…NSLDKLKTDC (363 aa). The GS domain maps to 178–207; it reads STLADLLDHSCTSGSGSGLPFLVQRTVARQ. Residues 208 to 502 form the Protein kinase domain; the sequence is ITLLECVGKG…KTLTKIDNSL (295 aa). ATP-binding positions include 214–222 and Lys235; that span reads VGKGRYGEV. The Proton acceptor role is filled by Asp336. At Ser501 the chain carries Phosphoserine.

The protein belongs to the protein kinase superfamily. TKL Ser/Thr protein kinase family. TGFB receptor subfamily. In terms of assembly, interacts with FKBP1A. Interacts with FCHO1. Interacts with CLU. Interacts with type II receptors AMHR2 and ACVR2A. Interacts with BMP7. Interacts with GDF2/BMP9. Interacts with BMP6 (when glycosylated); the interaction may induce HAMP expression. Interacts with TSC22D1/TSC-22. The cofactor is Mg(2+). Requires Mn(2+) as cofactor. As to expression, expressed in normal parenchymal cells, endothelial cells, fibroblasts and tumor-derived epithelial cells.

The protein localises to the membrane. The enzyme catalyses L-threonyl-[receptor-protein] + ATP = O-phospho-L-threonyl-[receptor-protein] + ADP + H(+). It carries out the reaction L-seryl-[receptor-protein] + ATP = O-phospho-L-seryl-[receptor-protein] + ADP + H(+). Its function is as follows. Bone morphogenetic protein (BMP) type I receptor that is involved in a wide variety of biological processes, including bone, heart, cartilage, nervous, and reproductive system development and regulation. As a type I receptor, forms heterotetrameric receptor complexes with the type II receptors AMHR2, ACVR2A or ACVR2B. Upon binding of ligands such as BMP7 or GDF2/BMP9 to the heteromeric complexes, type II receptors transphosphorylate ACVR1 intracellular domain. In turn, ACVR1 kinase domain is activated and subsequently phosphorylates SMAD1/5/8 proteins that transduce the signal. In addition to its role in mediating BMP pathway-specific signaling, suppresses TGFbeta/activin pathway signaling by interfering with the binding of activin to its type II receptor. Besides canonical SMAD signaling, can activate non-canonical pathways such as p38 mitogen-activated protein kinases/MAPKs. May promote the expression of HAMP, potentially via its interaction with BMP6. This chain is Activin receptor type-1 (ACVR1), found in Homo sapiens (Human).